Reading from the N-terminus, the 200-residue chain is Elongation factor Ts (200 aa).

The tract at residues 81–84 is involved in Mg(2+) ion dislocation from EF-Tu; it reads TDFV.

It belongs to the EF-Ts family.

Its subcellular location is the cytoplasm. Its function is as follows. Associates with the EF-Tu.GDP complex and induces the exchange of GDP to GTP. It remains bound to the aminoacyl-tRNA.EF-Tu.GTP complex up to the GTP hydrolysis stage on the ribosome. This Nitratidesulfovibrio vulgaris (strain DSM 19637 / Miyazaki F) (Desulfovibrio vulgaris) protein is Elongation factor Ts.